The chain runs to 24 residues: GLGSVLGKILKMGANLLGGAPKGA.

As to expression, expressed by the skin glands.

It localises to the secreted. Its function is as follows. Antimicrobial peptide. The protein is Caerulein precursor fragment BM1 of Xenopus boumbaensis (Mawa clawed frog).